Here is a 357-residue protein sequence, read N- to C-terminus: Isopentenyl-diphosphate delta-isomerase (357 aa).

12–13 contributes to the substrate binding site; sequence RK. Residues Ser70, 71 to 73, Ser101, and Asn130 each bind FMN; that span reads SMT. 101–103 is a substrate binding site; it reads SMR. Gln165 serves as a coordination point for substrate. Glu166 serves as a coordination point for Mg(2+). Residues Lys197 and 310–311 each bind FMN; that span reads AR.

This sequence belongs to the IPP isomerase type 2 family. In terms of assembly, homooctamer. Dimer of tetramers. FMN is required as a cofactor. Requires NADPH as cofactor. The cofactor is Mg(2+).

The protein resides in the cytoplasm. It carries out the reaction isopentenyl diphosphate = dimethylallyl diphosphate. In terms of biological role, involved in the biosynthesis of isoprenoids. Catalyzes the 1,3-allylic rearrangement of the homoallylic substrate isopentenyl (IPP) to its allylic isomer, dimethylallyl diphosphate (DMAPP). The chain is Isopentenyl-diphosphate delta-isomerase from Pelodictyon phaeoclathratiforme (strain DSM 5477 / BU-1).